The following is a 349-amino-acid chain: Small ribosomal subunit biogenesis GTPase RsgA (349 aa).

The span at 1–11 (MSKKKLSKGQQ) shows a compositional bias: basic residues. A disordered region spans residues 1–29 (MSKKKLSKGQQRRVSANHQRRLKKTESKV). A CP-type G domain is found at 102–272 (HSVLTRPDYY…VIDSPGVREF (171 aa)). Residues 158–161 (NKID) and 212–220 (GQSGVGKSS) contribute to the GTP site. Residues Cys296, Cys301, His303, and Cys309 each contribute to the Zn(2+) site.

It belongs to the TRAFAC class YlqF/YawG GTPase family. RsgA subfamily. As to quaternary structure, monomer. Associates with 30S ribosomal subunit, binds 16S rRNA. It depends on Zn(2+) as a cofactor.

Its subcellular location is the cytoplasm. In terms of biological role, one of several proteins that assist in the late maturation steps of the functional core of the 30S ribosomal subunit. Helps release RbfA from mature subunits. May play a role in the assembly of ribosomal proteins into the subunit. Circularly permuted GTPase that catalyzes slow GTP hydrolysis, GTPase activity is stimulated by the 30S ribosomal subunit. The protein is Small ribosomal subunit biogenesis GTPase RsgA of Pectobacterium carotovorum subsp. carotovorum (strain PC1).